The primary structure comprises 123 residues: Protein Wnt-7 (123 aa).

A lipid anchor (O-palmitoleoyl serine; by PORCN) is attached at Ser1. The cysteines at positions 89 and 104 are disulfide-linked. A glycan (N-linked (GlcNAc...) asparagine) is linked at Asn90.

This sequence belongs to the Wnt family. Palmitoleoylation is required for efficient binding to frizzled receptors. Depalmitoleoylation leads to Wnt signaling pathway inhibition.

The protein localises to the secreted. It localises to the extracellular space. The protein resides in the extracellular matrix. Functionally, ligand for members of the frizzled family of seven transmembrane receptors. Probable developmental protein. May be a signaling molecule which affects the development of discrete regions of tissues. Is likely to signal over only few cell diameters. In Evasterias troschelii (Mottled sea star), this protein is Protein Wnt-7 (WNT-7).